The following is a 296-amino-acid chain: Cation-efflux pump FieF (296 aa).

Residues 1–18 (MTQTSQYDFWVKLASRAS) lie on the Cytoplasmic side of the membrane. A helical transmembrane segment spans residues 19 to 32 (VATALTLITIKLLA). Over 33–43 (WLYSGSASMLA) the chain is Periplasmic. Residues 44 to 60 (SLTDSFADTLASIINFI) traverse the membrane as a helical segment. Zn(2+)-binding residues include Asp-47, Asp-51, Asp-70, His-73, and His-77. At 61–83 (AIRYAIVPADHDHRYGHGKAEPL) the chain is on the cytoplasmic side. A helical membrane pass occupies residues 84–105 (AALAQSAFIMGSAFLLLFYGGE). Over 106–119 (RLLNPSPVENATLG) the chain is Periplasmic. A helical membrane pass occupies residues 120–138 (VVVSVVAIVLTLALVLLQK). Residues 139–145 (RALAATN) lie on the Cytoplasmic side of the membrane. Residues 146 to 160 (STVVEADSLHYKSDL) form a helical membrane-spanning segment. Residues His-155 and Asp-159 each coordinate Zn(2+). The Periplasmic segment spans residues 161–180 (FLNAAVLLALVLSQYGWWWA). A helical transmembrane segment spans residues 181-200 (DGLFAVLIACYIGQQAFDLG). At 201-296 (YRSIQALLDR…DPVQVEPTTQ (96 aa)) the chain is on the cytoplasmic side. The Zn(2+) site is built by His-234, Asp-235, His-250, His-263, His-285, and Asp-287.

The protein belongs to the cation diffusion facilitator (CDF) transporter (TC 2.A.4) family. FieF subfamily. Homodimer. The subunits are held together in a parallel orientation through zinc binding at the interface of the cytoplasmic domains.

The protein localises to the cell inner membrane. It catalyses the reaction Zn(2+)(in) + H(+)(out) = Zn(2+)(out) + H(+)(in). It carries out the reaction Cd(2+)(in) + H(+)(out) = Cd(2+)(out) + H(+)(in). The catalysed reaction is Fe(2+)(in) + H(+)(out) = Fe(2+)(out) + H(+)(in). Its activity is regulated as follows. Cytoplasmic zinc binding may trigger movements of two electrically repulsive cytoplasmic domains and reorient transmembrane helices, thereby modulating coordination geometry of the active site for zinc transport. It may modulate activity in response to cytoplasmic metal fluctuations. Functionally, divalent metal cation transporter which exports Zn(2+), Cd(2+) and possibly Fe(2+). Zn(2+)/H(+) antiporter capable of using the proton motive force to remove Zn(2+) from the cytoplasm. May be involved in zinc and iron detoxification by efflux. This Shewanella oneidensis (strain ATCC 700550 / JCM 31522 / CIP 106686 / LMG 19005 / NCIMB 14063 / MR-1) protein is Cation-efflux pump FieF.